A 377-amino-acid polypeptide reads, in one-letter code: DNA replication and repair protein RecF (377 aa).

Residue Gly-30–Thr-37 participates in ATP binding.

Belongs to the RecF family.

It is found in the cytoplasm. In terms of biological role, the RecF protein is involved in DNA metabolism; it is required for DNA replication and normal SOS inducibility. RecF binds preferentially to single-stranded, linear DNA. It also seems to bind ATP. The polypeptide is DNA replication and repair protein RecF (Thermobifida fusca (strain YX)).